The sequence spans 530 residues: C2H2-type transcription factor MSN2 (530 aa).

C2H2-type zinc fingers lie at residues 409 to 432 (FVCDLCNRRFRRQEHLKRHYRSLH) and 438 to 460 (FECNECGKKFSRSDNLAQHARTH).

The protein resides in the nucleus. It is found in the cytoplasm. Functionally, transcription factor that acts as a key downstream transcription factor in the HOG1-MAPK pathway. Plays crucial roles in the regulation of conidiation, virulence and multi-stress responses. In addition to regulating the expression of genes specifically involved in stress-response, conidiation and virulence, controls also expression of cellular signaling factors. The sequence is that of C2H2-type transcription factor MSN2 from Metarhizium robertsii (strain ARSEF 23 / ATCC MYA-3075) (Metarhizium anisopliae (strain ARSEF 23)).